Consider the following 800-residue polypeptide: Nucleolar RNA helicase 2-B (800 aa).

A compositionally biased stretch (basic and acidic residues) spans 1–14; the sequence is MPGKVYTDEMEGKS. The tract at residues 1–200 is disordered; that stretch reads MPGKVYTDEM…TDTSEITAAN (200 aa). Positions 114–124 are enriched in polar residues; that stretch reads ETNISLSSQGG. Positions 221–249 match the Q motif motif; it reads GDFSKFPISKDTIKNLQAKGVTYLFPIQS. A Helicase ATP-binding domain is found at 252–431; the sequence is FHTVYSGKDV…KKYMRKQYEK (180 aa). ATP is bound at residue 265–272; the sequence is ARTGTGKT. The DEAD box signature appears at 374 to 377; it reads DEVD. One can recognise a Helicase C-terminal domain in the interval 464 to 620; the sequence is DIVQVYSGSH…SSADAIKSLD (157 aa). A disordered region spans residues 750–800; that stretch reads IQESERSFDGPRNRSFGGRGRRPFDRRNNSRNSSGGGGGRRGRSGGFRRGR. Residues 752 to 761 show a composition bias toward basic and acidic residues; that stretch reads ESERSFDGPR. Positions 789–800 are enriched in basic residues; the sequence is RRGRSGGFRRGR.

This sequence belongs to the DEAD box helicase family. DDX21/DDX50 subfamily. In terms of tissue distribution, widely expressed. Expressed at higher level in stomach. Expressed at lower level compared to ddx21-a.

It localises to the nucleus. The protein resides in the nucleolus. Its subcellular location is the nucleoplasm. The protein localises to the cytoplasm. It is found in the cytosol. It localises to the mitochondrion. The enzyme catalyses ATP + H2O = ADP + phosphate + H(+). In terms of biological role, RNA helicase that acts as a sensor of the transcriptional status of both RNA polymerase (Pol) I and II: promotes ribosomal RNA (rRNA) processing and transcription from polymerase II (Pol II). Binds various RNAs, such as rRNAs, snoRNAs, 7SK and, at lower extent, mRNAs. In the nucleolus, localizes to rDNA locus, where it directly binds rRNAs and snoRNAs, and promotes rRNA transcription, processing and modification. Required for rRNA 2'-O-methylation, possibly by promoting the recruitment of late-acting snoRNAs SNORD56 and SNORD58 with pre-ribosomal complexes. In the nucleoplasm, binds 7SK RNA and is recruited to the promoters of Pol II-transcribed genes: acts by facilitating the release of P-TEFb from inhibitory 7SK snRNP in a manner that is dependent on its helicase activity, thereby promoting transcription of its target genes. Required to prevent R-loop-associated DNA damage and transcription-associated genomic instability. This is Nucleolar RNA helicase 2-B (ddx21-b) from Xenopus laevis (African clawed frog).